The sequence spans 385 residues: Leucine aminopeptidase 1 (385 aa).

The signal sequence occupies residues 1–20; sequence MKLPSLLSLGVAASTTIVAA. A propeptide spanning residues 21-87 is cleaved from the precursor; the sequence is VPDQKPIGDT…FPKTFAQTTV (67 aa). N-linked (GlcNAc...) asparagine glycosylation occurs at Asn-177. Zn(2+) contacts are provided by His-185, Asp-204, Glu-243, and Asp-270. An intrachain disulfide couples Cys-319 to Cys-323. His-352 is a Zn(2+) binding site.

This sequence belongs to the peptidase M28 family. M28E subfamily. In terms of assembly, monomer. Requires Zn(2+) as cofactor.

It is found in the secreted. Its function is as follows. Extracellular aminopeptidase that allows assimilation of proteinaceous substrates. This chain is Leucine aminopeptidase 1 (LAP1), found in Ajellomyces capsulatus (strain NAm1 / WU24) (Darling's disease fungus).